Consider the following 477-residue polypeptide: Shikimate biosynthesis protein AroDE (477 aa).

A 3-dehydroquinate dehydratase region spans residues 1–209 (MLCATVSGPS…LEELLSYNYS (209 aa)). 3-dehydroquinate is bound by residues serine 21, 29 to 31 (ELR), and 56 to 58 (TFR). The Proton donor/acceptor; for 3-dehydroquinate dehydratase activity role is filled by histidine 111. Lysine 134 serves as the catalytic Schiff-base intermediate with substrate; for 3-dehydroquinate dehydratase activity. Residues arginine 172 and glutamine 197 each contribute to the 3-dehydroquinate site. Residues 210–477 (KLSEKSHIYG…NYVKNFMAKV (268 aa)) form a shikimate 5-dehydrogenase region. Residue 228–230 (SIS) coordinates shikimate. Lysine 279 serves as the catalytic Proton acceptor; for shikimate dehydrogenase activity. Positions 300 and 315 each coordinate shikimate. Residues 339 to 343 (GAGGA), 362 to 364 (NRT), and glycine 438 each bind NADP(+). Residue glutamine 445 coordinates shikimate.

The protein in the N-terminal section; belongs to the type-I 3-dehydroquinase family. In the C-terminal section; belongs to the shikimate dehydrogenase family.

It carries out the reaction 3-dehydroquinate = 3-dehydroshikimate + H2O. It catalyses the reaction shikimate + NADP(+) = 3-dehydroshikimate + NADPH + H(+). Its pathway is metabolic intermediate biosynthesis; chorismate biosynthesis; chorismate from D-erythrose 4-phosphate and phosphoenolpyruvate: step 3/7. It functions in the pathway metabolic intermediate biosynthesis; chorismate biosynthesis; chorismate from D-erythrose 4-phosphate and phosphoenolpyruvate: step 4/7. Bifunctional enzyme that catalyzes two sequential steps of the aromatic amino acids biosynthetic pathway. In the first reaction, the AroD domain catalyzes the cis-dehydration of 3-dehydroquinate (DHQ) and introduces the first double bond of the aromatic ring to yield 3-dehydroshikimate; in the second reaction, the AroE domain catalyzes the reversible NADPH linked reduction of 3-dehydroshikimate (DHSA) to yield shikimate (SA). The polypeptide is Shikimate biosynthesis protein AroDE (Chlamydia pneumoniae (Chlamydophila pneumoniae)).